The primary structure comprises 408 residues: Imidazolonepropionase (408 aa).

Residues H73 and H75 each contribute to the Fe(3+) site. The Zn(2+) site is built by H73 and H75. R82, Y145, and H178 together coordinate 4-imidazolone-5-propanoate. Y145 contacts N-formimidoyl-L-glutamate. Fe(3+) is bound at residue H243. H243 is a Zn(2+) binding site. Q246 is a 4-imidazolone-5-propanoate binding site. D318 lines the Fe(3+) pocket. D318 provides a ligand contact to Zn(2+). N-formimidoyl-L-glutamate contacts are provided by N320 and G322. S323 provides a ligand contact to 4-imidazolone-5-propanoate.

Belongs to the metallo-dependent hydrolases superfamily. HutI family. Zn(2+) serves as cofactor. Requires Fe(3+) as cofactor.

The protein localises to the cytoplasm. The enzyme catalyses 4-imidazolone-5-propanoate + H2O = N-formimidoyl-L-glutamate. The protein operates within amino-acid degradation; L-histidine degradation into L-glutamate; N-formimidoyl-L-glutamate from L-histidine: step 3/3. Catalyzes the hydrolytic cleavage of the carbon-nitrogen bond in imidazolone-5-propanoate to yield N-formimidoyl-L-glutamate. It is the third step in the universal histidine degradation pathway. The chain is Imidazolonepropionase from Shewanella piezotolerans (strain WP3 / JCM 13877).